A 132-amino-acid polypeptide reads, in one-letter code: Protein NrdI (132 aa).

This sequence belongs to the NrdI family.

Its function is as follows. Probably involved in ribonucleotide reductase function. The polypeptide is Protein NrdI (Bartonella henselae (strain ATCC 49882 / DSM 28221 / CCUG 30454 / Houston 1) (Rochalimaea henselae)).